Here is a 239-residue protein sequence, read N- to C-terminus: 4-hydroxy-tetrahydrodipicolinate reductase (239 aa).

NAD(+) contacts are provided by residues 9–14 (GINGKI), 78–80 (GTT), and 104–107 (APNF). H134 functions as the Proton donor/acceptor in the catalytic mechanism. (S)-2,3,4,5-tetrahydrodipicolinate is bound at residue H135. Residue K138 is the Proton donor of the active site. Residue 144–145 (GT) coordinates (S)-2,3,4,5-tetrahydrodipicolinate.

Belongs to the DapB family.

Its subcellular location is the cytoplasm. The catalysed reaction is (S)-2,3,4,5-tetrahydrodipicolinate + NAD(+) + H2O = (2S,4S)-4-hydroxy-2,3,4,5-tetrahydrodipicolinate + NADH + H(+). The enzyme catalyses (S)-2,3,4,5-tetrahydrodipicolinate + NADP(+) + H2O = (2S,4S)-4-hydroxy-2,3,4,5-tetrahydrodipicolinate + NADPH + H(+). Its pathway is amino-acid biosynthesis; L-lysine biosynthesis via DAP pathway; (S)-tetrahydrodipicolinate from L-aspartate: step 4/4. In terms of biological role, catalyzes the conversion of 4-hydroxy-tetrahydrodipicolinate (HTPA) to tetrahydrodipicolinate. The polypeptide is 4-hydroxy-tetrahydrodipicolinate reductase (Coxiella burnetii (strain CbuG_Q212) (Coxiella burnetii (strain Q212))).